Reading from the N-terminus, the 143-residue chain is Late embryogenesis abundant protein 1 (143 aa).

Over residues 1-17 the composition is skewed to low complexity; sequence MSSQQNQNRQGEQQEQG. Residues 1–143 are disordered; the sequence is MSSQQNQNRQ…QAGEKVKGRD (143 aa). 4 tandem repeats follow at residues 47–57, 69–79, 80–90, and 91–101. 2 stretches are compositionally biased toward basic and acidic residues: residues 47–60 and 69–143; these read KTAE…ETIR and KGQE…KGRD. A 4 X 11 AA approximate repeats region spans residues 47-101; sequence KTAEFRDSAGETIRDLTGQAQEKGQEFKERAGEKAEETKQRAGEKMDETKQRAGE.

It belongs to the LEA type 4 family.

In terms of biological role, may be involved in defense against water stress. This chain is Late embryogenesis abundant protein 1, found in Aphelenchoides avenae (Mycophagous nematode worm).